Reading from the N-terminus, the 76-residue chain is EMBRYO SURROUNDING FACTOR 1-like protein 8 (76 aa).

An N-terminal signal peptide occupies residues 1–22 (MSSSQFFILCIILISSFPLHEC). Cystine bridges form between Cys38–Cys54, Cys43–Cys74, Cys52–Cys70, and Cys55–Cys63.

The protein belongs to the MEG family. As to expression, expressed in flowers.

This Arabidopsis thaliana (Mouse-ear cress) protein is EMBRYO SURROUNDING FACTOR 1-like protein 8 (ESFL8).